Here is a 133-residue protein sequence, read N- to C-terminus: Cytidine deaminase (133 aa).

The CMP/dCMP-type deaminase domain occupies Val3 to Tyr131. Asn43–Glu45 is a substrate binding site. Cys54 is a binding site for Zn(2+). The active-site Proton donor is the Glu56. The Zn(2+) site is built by Cys89 and Cys92.

The protein belongs to the cytidine and deoxycytidylate deaminase family. As to quaternary structure, homodimer. Zn(2+) is required as a cofactor.

The enzyme catalyses cytidine + H2O + H(+) = uridine + NH4(+). It carries out the reaction 2'-deoxycytidine + H2O + H(+) = 2'-deoxyuridine + NH4(+). Functionally, this enzyme scavenges exogenous and endogenous cytidine and 2'-deoxycytidine for UMP synthesis. The polypeptide is Cytidine deaminase (cdd) (Mycoplasma pneumoniae (strain ATCC 29342 / M129 / Subtype 1) (Mycoplasmoides pneumoniae)).